Here is an 86-residue protein sequence, read N- to C-terminus: Small ribosomal subunit protein uS15 (86 aa).

The span at 1–10 shows a compositional bias: polar residues; the sequence is MSIDTQSIIE. Residues 1 to 21 are disordered; sequence MSIDTQSIIENNKRSAHDTGS.

This sequence belongs to the universal ribosomal protein uS15 family. As to quaternary structure, part of the 30S ribosomal subunit. Forms a bridge to the 50S subunit in the 70S ribosome, contacting the 23S rRNA.

Functionally, one of the primary rRNA binding proteins, it binds directly to 16S rRNA where it helps nucleate assembly of the platform of the 30S subunit by binding and bridging several RNA helices of the 16S rRNA. In terms of biological role, forms an intersubunit bridge (bridge B4) with the 23S rRNA of the 50S subunit in the ribosome. This Xylella fastidiosa (strain M23) protein is Small ribosomal subunit protein uS15.